Consider the following 365-residue polypeptide: MDFETQVVLHNLKKSVEVIRRQLDIEKKHSRLEEIQALVDSPTLWEDQSRAQLLLKEKSQIETSLKEFKELSIQLDDLIEMIELASKDHEEETMKDLERELLLLKEKIQKKEIECLFSGEADGNDCLLEIQSGAGGTESNDWAMMLLRMYTRWAEIYHKFQVQIVDKVEGEETGIKSCTLKVMGKNAYGWARTETGVHRLVRISPFDANAKRHTSFAKIFVSPCIEGEINISIDEKDLKIDTYRASGAGGQHVNKTESAIRITHLPSKIVVQSQSSRSQHQNKAEAMQMLKSRLYEIELRKKEEKLNAARNVEDSIGWGYQIRSYVLHPYQMIKDLRTGHEVGNITSVLDGDLDSFIIATISNNS.

Glutamine 251 is subject to N5-methylglutamine.

It belongs to the prokaryotic/mitochondrial release factor family. In terms of processing, methylated by PrmC. Methylation increases the termination efficiency of RF2.

The protein localises to the cytoplasm. In terms of biological role, peptide chain release factor 2 directs the termination of translation in response to the peptide chain termination codons UGA and UAA. This Neorickettsia sennetsu (strain ATCC VR-367 / Miyayama) (Ehrlichia sennetsu) protein is Peptide chain release factor 2.